Reading from the N-terminus, the 340-residue chain is DNA primase large subunit PriL (340 aa).

4 residues coordinate [4Fe-4S] cluster: cysteine 229, cysteine 301, cysteine 310, and cysteine 318.

It belongs to the eukaryotic-type primase large subunit family. Heterodimer of a small subunit (PriS) and a large subunit (PriL). It depends on [4Fe-4S] cluster as a cofactor.

Regulatory subunit of DNA primase, an RNA polymerase that catalyzes the synthesis of short RNA molecules used as primers for DNA polymerase during DNA replication. Stabilizes and modulates the activity of the small subunit, increasing the rate of DNA synthesis, and conferring RNA synthesis capability. The DNA polymerase activity may enable DNA primase to also catalyze primer extension after primer synthesis. May also play a role in DNA repair. This is DNA primase large subunit PriL from Thermoplasma acidophilum (strain ATCC 25905 / DSM 1728 / JCM 9062 / NBRC 15155 / AMRC-C165).